A 561-amino-acid chain; its full sequence is BTB/POZ domain-containing protein At2g46260 (561 aa).

Disordered stretches follow at residues 1-31 (MRGS…EGDF) and 100-119 (LTDN…NLDD). Over residues 17–28 (DSNFSRHGSSSE) the composition is skewed to polar residues. A compositionally biased stretch (acidic residues) spans 107–119 (DMDDAPGGDNLDD). Residues 143–212 (IDCSTVVRVK…MYSNSLSVTT (70 aa)) enclose the BTB domain. The 93-residue stretch at 266–358 (QPLTDAAKQF…YMTCRKLKKV (93 aa)) folds into the BACK domain.

The protein operates within protein modification; protein ubiquitination. May act as a substrate-specific adapter of an E3 ubiquitin-protein ligase complex (CUL3-RBX1-BTB) which mediates the ubiquitination and subsequent proteasomal degradation of target proteins. In Arabidopsis thaliana (Mouse-ear cress), this protein is BTB/POZ domain-containing protein At2g46260.